A 458-amino-acid chain; its full sequence is MFRPEEIIETIKMIKMENLDLRTVTLGLSLRDCVSKDLDELKENIYNKITSSAENLVETAERISEKYGIPIVNKRIAVTPISLVIGGAIKDLDKEEQIKACVEVGEVLDKAAKKVRVDFLGGYSALVHKDATKEDRALIDSIPFMMEKTERVCSSVNVASTKTGINMDAVKRMGEIIKETAFRTEKAIGCAKLVVFANAPEDNPFMAGAFHGVGEGDKVINVGVSGPGVVRAVIEKLPDADFGTLANEIKKVAFKITRVGELIGREVSKELGVKFGVVDLSLAPTPARGDSIANILEAMGLEKCGTHGSTAALALLNDAVKKGGAMATSYVGGLSGAFIPVSEDSGMVEAVEAGALTLEKLEAMTCVCSVGIDMVAIPGDTPASTISAIIADEMAIGVINNKTTAVRIIPVPGKKAGEYVDYGGLLGKAPIMEVNKYSSEKFIKRGGRIPAPLQALTN.

This sequence belongs to the UPF0210 family.

The chain is UPF0210 protein MJ1665 from Methanocaldococcus jannaschii (strain ATCC 43067 / DSM 2661 / JAL-1 / JCM 10045 / NBRC 100440) (Methanococcus jannaschii).